The following is a 1041-amino-acid chain: Protein SMAX1-like (1041 aa).

The Clp R domain occupies 8–188 (IQQTLTPEAA…KSIIEQSLSA (181 aa)). Repeat regions lie at residues 12-98 (LTPE…LDRL) and 117-188 (VSNA…SLSA). The span at 189–205 (PSPCPSAAASTTTAGPG) shows a compositional bias: low complexity. 3 disordered regions span residues 189–214 (PSPC…PSPL), 482–513 (EAEQ…QNKA), and 889–913 (EGSH…VKRS). The span at 482–495 (EAEQTDKPASRPEA) shows a compositional bias: basic and acidic residues. Residues 891-900 (SHNSSDVSVE) are compositionally biased toward polar residues.

This sequence belongs to the ClpA/ClpB family.

In terms of biological role, may act downstream of MAX2 to negatively regulate karrikins/strigolactone responses. Acts probably specifically in the karrikin pathway. May function in a transcriptional corepressor complex. The sequence is that of Protein SMAX1-like from Oryza sativa subsp. japonica (Rice).